Here is a 111-residue protein sequence, read N- to C-terminus: Large ribosomal subunit protein eL34B (111 aa).

Residue Y76 is modified to Phosphotyrosine.

This sequence belongs to the eukaryotic ribosomal protein eL34 family. Component of the large ribosomal subunit (LSU). Mature yeast ribosomes consist of a small (40S) and a large (60S) subunit. The 40S small subunit contains 1 molecule of ribosomal RNA (18S rRNA) and at least 33 different proteins. The large 60S subunit contains 3 rRNA molecules (25S, 5.8S and 5S rRNA) and at least 46 different proteins.

The protein resides in the cytoplasm. It is found in the nucleus. It localises to the nucleolus. Component of the ribosome, a large ribonucleoprotein complex responsible for the synthesis of proteins in the cell. The small ribosomal subunit (SSU) binds messenger RNAs (mRNAs) and translates the encoded message by selecting cognate aminoacyl-transfer RNA (tRNA) molecules. The large subunit (LSU) contains the ribosomal catalytic site termed the peptidyl transferase center (PTC), which catalyzes the formation of peptide bonds, thereby polymerizing the amino acids delivered by tRNAs into a polypeptide chain. The nascent polypeptides leave the ribosome through a tunnel in the LSU and interact with protein factors that function in enzymatic processing, targeting, and the membrane insertion of nascent chains at the exit of the ribosomal tunnel. The protein is Large ribosomal subunit protein eL34B (rpl3402) of Schizosaccharomyces pombe (strain 972 / ATCC 24843) (Fission yeast).